Here is a 211-residue protein sequence, read N- to C-terminus: Protein-L-isoaspartate O-methyltransferase 2 (211 aa).

Ser-60 is an active-site residue.

Belongs to the methyltransferase superfamily. L-isoaspartyl/D-aspartyl protein methyltransferase family.

The protein localises to the cytoplasm. The enzyme catalyses [protein]-L-isoaspartate + S-adenosyl-L-methionine = [protein]-L-isoaspartate alpha-methyl ester + S-adenosyl-L-homocysteine. Its function is as follows. Catalyzes the methyl esterification of L-isoaspartyl residues in peptides and proteins that result from spontaneous decomposition of normal L-aspartyl and L-asparaginyl residues. It plays a role in the repair and/or degradation of damaged proteins. The polypeptide is Protein-L-isoaspartate O-methyltransferase 2 (Nitrosospira multiformis (strain ATCC 25196 / NCIMB 11849 / C 71)).